A 310-amino-acid polypeptide reads, in one-letter code: Olfactory receptor 10N1 (310 aa).

Topologically, residues M1–T23 are extracellular. An N-linked (GlcNAc...) asparagine glycan is attached at N3. The helical transmembrane segment at L24–F44 threads the bilayer. Over T45–T55 the chain is Cytoplasmic. A helical transmembrane segment spans residues P56–C76. Residues P77–C95 are Extracellular-facing. Residues C95 and C187 are joined by a disulfide bond. The helical transmembrane segment at A96–M116 threads the bilayer. The Cytoplasmic segment spans residues A117 to P136. The chain crosses the membrane as a helical span at residues G137–L157. Residues T158–G202 lie on the Extracellular side of the membrane. Residues F203–I223 form a helical membrane-spanning segment. At L224–S237 the chain is on the cytoplasmic side. The chain crosses the membrane as a helical span at residues T238–L258. Residues Q259–P264 lie on the Extracellular side of the membrane. Residues L265–I285 traverse the membrane as a helical segment. Over Y286–K310 the chain is Cytoplasmic.

Belongs to the G-protein coupled receptor 1 family.

Its subcellular location is the cell membrane. In terms of biological role, odorant receptor. This chain is Olfactory receptor 10N1, found in Mus musculus (Mouse).